The sequence spans 426 residues: tRNA (guanine(37)-N(1))-methyltransferase (426 aa).

S-adenosyl-L-methionine-binding positions include His-203, 242 to 243 (DL), 269 to 270 (DA), and Asn-292. The segment at 374 to 426 (RISFKMPTLKKRKDTENNDDQENNNNSSNNNNNNKIDYNEAVSSGGEGKKIKH) is disordered. A compositionally biased stretch (low complexity) spans 396-407 (NNNNSSNNNNNN).

It belongs to the class I-like SAM-binding methyltransferase superfamily. TRM5/TYW2 family. As to quaternary structure, monomer.

Its subcellular location is the mitochondrion matrix. The protein localises to the nucleus. It is found in the cytoplasm. The enzyme catalyses guanosine(37) in tRNA + S-adenosyl-L-methionine = N(1)-methylguanosine(37) in tRNA + S-adenosyl-L-homocysteine + H(+). Functionally, specifically methylates the N1 position of guanosine-37 in various cytoplasmic and mitochondrial tRNAs. Methylation is not dependent on the nature of the nucleoside 5' of the target nucleoside. This is the first step in the biosynthesis of wybutosine (yW), a modified base adjacent to the anticodon of tRNAs and required for accurate decoding. The sequence is that of tRNA (guanine(37)-N(1))-methyltransferase (trmt5) from Heterostelium pallidum (strain ATCC 26659 / Pp 5 / PN500) (Cellular slime mold).